The following is a 178-amino-acid chain: MQNKQNLIWIDLEMTGLDPDTDVIIEMATIITDSELNTLAEGPVIAVHQSDETLAKMDEWNTRQHGGSGLTQRVRESTISMAEAEAQTLEFIKLWVPERSSPICGNSICQDRRFLYRHMPTLENWFHYRNLDVSTLKELAARWSPELKFKKGSTHLALDDIRESIAELRFYREHFIKP.

The 162-residue stretch at 7–168 (LIWIDLEMTG…DDIRESIAEL (162 aa)) folds into the Exonuclease domain. Tyr-128 is an active-site residue.

This sequence belongs to the oligoribonuclease family.

The protein localises to the cytoplasm. Functionally, 3'-to-5' exoribonuclease specific for small oligoribonucleotides. This is Oligoribonuclease from Pseudomonas savastanoi pv. phaseolicola (strain 1448A / Race 6) (Pseudomonas syringae pv. phaseolicola (strain 1448A / Race 6)).